We begin with the raw amino-acid sequence, 43 residues long: Potassium channel toxin gamma-KTx 4.12 (43 aa).

Intrachain disulfides connect C5-C23, C11-C34, C20-C39, and C24-C41.

Expressed by the venom gland.

The protein localises to the secreted. Reversibly blocks Kv11/ERG potassium channels. Is less toxic than ergtoxin (AC Q86QT3). The polypeptide is Potassium channel toxin gamma-KTx 4.12 (Centruroides sculpturatus (Arizona bark scorpion)).